The primary structure comprises 645 residues: MSLNFSQKNAVELTNGPCLILAGAGSGKTKVIINKIIYLINHCQYEPDNIAAVTFTNKAAYEMRIRLSKYLNIPEIKKIIISTFHSLGLEIIKKEIDALELNNNFTLLDEKDQILLLKKICKKEIKNNIQLLKKLNFMISYWKNKFLTPLQVQLLAKSSQEKDFAYVYEQYTNYLYKANILDFDDLICMPTLLLKNNKKIKIRWQKKISYLLVDEYQDTNNSQYELIKMLANKNSDFTLVGDDDQSIYSWRGANPQNIFLLKKDFPNLKIIKMEHNYRSSGRILKAANSLIANNIHYLEKKLFSQLKYGNLIKVLIGKNEENEAQKIVKKIISQYAKKKIKYRDFAILYRGNYQSRILEKALIKENIPYNISEKSSFFSRPEIKDLLSYLRVVINRDDNHAFMRIVNIPSRQIGKTTLKKLEEWANKKHVSLFQASNNIEIKKFLNENTIKKIKNFISKIEKFTAWSCLKPSNIIDDIVDDLEYEKWLSKFLKDPNKIKNSINNVHTLSQWFKNMIKGDDFEKPMTLFQIVTRMTIRDILDDNIIKEQQDRVQLMTLHASKGLEFPAVFIIGMCEGILPNQKSIDNDNIEEERRLTYVGITRAKKQLFFTYCYKRTQYGQILDMLPSRFLFELPQEDLKWEKKIF.

In terms of domain architecture, UvrD-like helicase ATP-binding spans 1-280 (MSLNFSQKNA…IKMEHNYRSS (280 aa)). ATP-binding positions include 22–29 (AGAGSGKT) and R278. In terms of domain architecture, UvrD-like helicase C-terminal spans 281–562 (GRILKAANSL…QLMTLHASKG (282 aa)).

This sequence belongs to the helicase family. UvrD subfamily. As to quaternary structure, homodimer.

It catalyses the reaction Couples ATP hydrolysis with the unwinding of duplex DNA by translocating in the 3'-5' direction.. The enzyme catalyses ATP + H2O = ADP + phosphate + H(+). Rep helicase is a single-stranded DNA-dependent ATPase involved in DNA replication; it can initiate unwinding at a nick in the DNA. It binds to the single-stranded DNA and acts in a progressive fashion along the DNA in the 3' to 5' direction. In Buchnera aphidicola subsp. Acyrthosiphon pisum (strain APS) (Acyrthosiphon pisum symbiotic bacterium), this protein is ATP-dependent DNA helicase Rep.